A 112-amino-acid chain; its full sequence is uncharacterized protein (112 aa).

Residues 89 to 106 traverse the membrane as a helical segment; it reads TLYVLVIVGLTILCFLLV.

Belongs to the IIV-6 466R family.

The protein resides in the membrane. This is an uncharacterized protein from Aedes vexans (Inland floodwater mosquito).